Here is a 78-residue protein sequence, read N- to C-terminus: Conotoxin 6 (78 aa).

Positions 1–22 are cleaved as a signal peptide; that stretch reads MKLTCMMIVAVLFLTAWIFITA. A propeptide spanning residues 23–51 is cleaved from the precursor; the sequence is DNSRNGIENLPRMRRHEMKNPKASKLNKR. Disulfide bonds link Cys-53-Cys-69, Cys-60-Cys-73, and Cys-68-Cys-77.

Belongs to the conotoxin O1 superfamily. In terms of tissue distribution, expressed by the venom duct.

The protein localises to the secreted. This chain is Conotoxin 6, found in Conus imperialis (Imperial cone).